Reading from the N-terminus, the 305-residue chain is Dihydroorotate dehydrogenase B (NAD(+)), catalytic subunit (305 aa).

Residues S20 and 44–45 (KG) each bind FMN. Substrate contacts are provided by residues K44 and 68-72 (NAIGI). FMN-binding residues include N98 and N126. A substrate-binding site is contributed by N126. Catalysis depends on C129, which acts as the Nucleophile. The FMN site is built by K165 and I191. 192 to 193 (NT) provides a ligand contact to substrate. FMN contacts are provided by residues G217, 243–244 (GG), and 265–266 (GT).

This sequence belongs to the dihydroorotate dehydrogenase family. Type 1 subfamily. In terms of assembly, heterotetramer of 2 PyrK and 2 PyrD type B subunits. The cofactor is FMN.

The protein resides in the cytoplasm. The catalysed reaction is (S)-dihydroorotate + NAD(+) = orotate + NADH + H(+). The protein operates within pyrimidine metabolism; UMP biosynthesis via de novo pathway; orotate from (S)-dihydroorotate (NAD(+) route): step 1/1. Functionally, catalyzes the conversion of dihydroorotate to orotate with NAD(+) as electron acceptor. The sequence is that of Dihydroorotate dehydrogenase B (NAD(+)), catalytic subunit (pyrD) from Maridesulfovibrio salexigens (strain ATCC 14822 / DSM 2638 / NCIMB 8403 / VKM B-1763) (Desulfovibrio salexigens).